We begin with the raw amino-acid sequence, 113 residues long: Nucleoid-associated protein Syncc9902_0023 (113 aa).

This sequence belongs to the YbaB/EbfC family. In terms of assembly, homodimer.

The protein localises to the cytoplasm. It localises to the nucleoid. Its function is as follows. Binds to DNA and alters its conformation. May be involved in regulation of gene expression, nucleoid organization and DNA protection. The polypeptide is Nucleoid-associated protein Syncc9902_0023 (Synechococcus sp. (strain CC9902)).